Reading from the N-terminus, the 278-residue chain is Asnovolin E/Chermesin D methyltransferase nvfJ (278 aa).

Residues 125 to 126 (DL), 152 to 153 (NI), and 153 to 154 (IL) each bind S-adenosyl-L-methionine.

The protein belongs to the class I-like SAM-binding methyltransferase superfamily. Homodimer.

It carries out the reaction chermesin D + S-adenosyl-L-methionine = chermesin D methyl ester + S-adenosyl-L-homocysteine. The enzyme catalyses asnovolin I + S-adenosyl-L-methionine = asnovolin K + S-adenosyl-L-homocysteine. The protein operates within secondary metabolite biosynthesis; terpenoid biosynthesis. Functionally, methyltransferase; part of the gene cluster that mediates the biosynthesis of novofumigatonin, a heavily oxygenated meroterpenoid containing a unique orthoester moiety. The first step of the pathway is the synthesis of 3,5-dimethylorsellinic acid (DMOA) by the polyketide synthase nvfA via condensation of one acetyl-CoA starter unit with 3 malonyl-CoA units and 2 methylations. DMOA is then converted to farnesyl-DMOA by the farnesyltransferase nvfB. Epoxydation by FAD-dependent monooxygenase nvfK, followed by a protonation-initiated cyclization catalyzed by the terpene cyclase nvfL leads to the production of asnavolin H. The short chain dehydrogenase nvfC then as a 3-OH dehydrogenase of asnovolin H to yield chemesin D. There are two branches to synthesize asnovolin A from chemesin D. In one branch, chemesin D undergoes Baeyer-Villiger oxidation by nvfH, methylation by nvfJ, and enoyl reduction by the nvfM D enoylreductase that reduces the double bond between C-5'and C-6', to form respectively asnovolin I, asnovolin K, and asnovolin A. In the other branch, the methylation precedes the Baeyer-Villiger oxidation and the enoyl reduction to yield asnovolin A via the asnovolin J intermediate. Asnovolin A is further converted to fumigatonoid A by the Fe(II)/2-oxoglutarate-dependent dioxygenase nvfI that catalyzes an endoperoxidation reaction. The alpha/beta hydrolase nvfD then acts as an epimerase that converts fumigatonoid A to its C-5' epimer, which then undergoes spontaneous or nvfD-catalyzed lactonization. The following step utilizes the ketoreductase nvfG to produce fumigatonoid B. The dioxygenase nvfE further converts fumigatonoid B into fumigatonoid C. Finally the Fe(II)/2-oxoglutarate-dependent dioxygenase nvfF catalyzes two rounds of oxidation to transform fumigatonoid C into the end product, novofumigatonin A. The protein is Asnovolin E/Chermesin D methyltransferase nvfJ of Aspergillus novofumigatus (strain IBT 16806).